Reading from the N-terminus, the 340-residue chain is MIILAIESSCDETGVGIAELSEDGTVTLLADEVASSVDEHARFGGVVPEIASRAHLEALGPTMRRALDTAGVGRPDVVAATIGPGLAGALLVGVAAAKAYSAAWQVPFYGVNHLGGHLAADVYDHGPLPESVGLLVSGGHTHLLHVRSLGEPIIELGSTVDDAAGEAYDKVARLLGLGYPGGKVLDDLARQGDREAIVFPRGMTGPRDDPFAFSFSGLKTAVARYVESHPEASQADVAAGFQEAVADVLTRKAVRAAETLGVSTLLIAGGVAANSRLRELAEQRCAESGLTLRIPRPRLCTDNGAMIASFAAHLIAAGAPPSPLEAASDPGLPVVRSQVA.

Positions 113 and 117 each coordinate Fe cation. Residues leucine 135–glycine 139, aspartate 169, glycine 182, aspartate 186, and asparagine 274 contribute to the substrate site. Aspartate 302 contributes to the Fe cation binding site.

This sequence belongs to the KAE1 / TsaD family. Requires Fe(2+) as cofactor.

Its subcellular location is the cytoplasm. It catalyses the reaction L-threonylcarbamoyladenylate + adenosine(37) in tRNA = N(6)-L-threonylcarbamoyladenosine(37) in tRNA + AMP + H(+). In terms of biological role, required for the formation of a threonylcarbamoyl group on adenosine at position 37 (t(6)A37) in tRNAs that read codons beginning with adenine. Is involved in the transfer of the threonylcarbamoyl moiety of threonylcarbamoyl-AMP (TC-AMP) to the N6 group of A37, together with TsaE and TsaB. TsaD likely plays a direct catalytic role in this reaction. The sequence is that of tRNA N6-adenosine threonylcarbamoyltransferase from Mycobacterium sp. (strain KMS).